A 412-amino-acid chain; its full sequence is Light-independent protochlorophyllide reductase subunit N (412 aa).

Positions 16, 41, and 102 each coordinate [4Fe-4S] cluster.

The protein belongs to the BchN/ChlN family. In terms of assembly, protochlorophyllide reductase is composed of three subunits; ChlL, ChlN and ChlB. Forms a heterotetramer of two ChlB and two ChlN subunits. Requires [4Fe-4S] cluster as cofactor.

The catalysed reaction is chlorophyllide a + oxidized 2[4Fe-4S]-[ferredoxin] + 2 ADP + 2 phosphate = protochlorophyllide a + reduced 2[4Fe-4S]-[ferredoxin] + 2 ATP + 2 H2O. It functions in the pathway porphyrin-containing compound metabolism; chlorophyll biosynthesis (light-independent). Functionally, component of the dark-operative protochlorophyllide reductase (DPOR) that uses Mg-ATP and reduced ferredoxin to reduce ring D of protochlorophyllide (Pchlide) to form chlorophyllide a (Chlide). This reaction is light-independent. The NB-protein (ChlN-ChlB) is the catalytic component of the complex. The sequence is that of Light-independent protochlorophyllide reductase subunit N from Synechococcus sp. (strain RCC307).